We begin with the raw amino-acid sequence, 64 residues long: Conotoxin Vc1.3 (64 aa).

The N-terminal stretch at 1–21 (MGMRMMFTVFLLVVLATTVVS) is a signal peptide. The propeptide occupies 22-43 (FTSDRASDGRKAAASDLITLTI). Intrachain disulfides connect Cys-46–Cys-52 and Cys-47–Cys-60. Cys-60 is modified (cysteine amide).

It belongs to the conotoxin A superfamily. As to expression, expressed by the venom duct.

It is found in the secreted. Functionally, may act as a toxin. The polypeptide is Conotoxin Vc1.3 (Conus victoriae (Queen Victoria cone)).